Here is a 368-residue protein sequence, read N- to C-terminus: 4-hydroxy-3-methylbut-2-en-1-yl diphosphate synthase (flavodoxin) (368 aa).

Positions 268, 271, 303, and 310 each coordinate [4Fe-4S] cluster.

This sequence belongs to the IspG family. [4Fe-4S] cluster serves as cofactor.

It carries out the reaction (2E)-4-hydroxy-3-methylbut-2-enyl diphosphate + oxidized [flavodoxin] + H2O + 2 H(+) = 2-C-methyl-D-erythritol 2,4-cyclic diphosphate + reduced [flavodoxin]. The protein operates within isoprenoid biosynthesis; isopentenyl diphosphate biosynthesis via DXP pathway; isopentenyl diphosphate from 1-deoxy-D-xylulose 5-phosphate: step 5/6. In terms of biological role, converts 2C-methyl-D-erythritol 2,4-cyclodiphosphate (ME-2,4cPP) into 1-hydroxy-2-methyl-2-(E)-butenyl 4-diphosphate. This chain is 4-hydroxy-3-methylbut-2-en-1-yl diphosphate synthase (flavodoxin), found in Listeria monocytogenes serovar 1/2a (strain ATCC BAA-679 / EGD-e).